Here is a 130-residue protein sequence, read N- to C-terminus: Small ribosomal subunit protein uS11 (130 aa).

The protein belongs to the universal ribosomal protein uS11 family. In terms of assembly, part of the 30S ribosomal subunit. Interacts with proteins S7 and S18. Binds to IF-3.

Functionally, located on the platform of the 30S subunit, it bridges several disparate RNA helices of the 16S rRNA. Forms part of the Shine-Dalgarno cleft in the 70S ribosome. The chain is Small ribosomal subunit protein uS11 from Gloeothece citriformis (strain PCC 7424) (Cyanothece sp. (strain PCC 7424)).